Here is a 517-residue protein sequence, read N- to C-terminus: Synaptic vesicular amine transporter (517 aa).

Residues 1–20 (MALSDLVLLRWLRDSRHSRK) are Cytoplasmic-facing. Residues 21–41 (LILFIVFLALLLDNMLLTVVV) form a helical membrane-spanning segment. The Extracellular portion of the chain corresponds to 42–132 (PIIPSYLYSI…EDKDLLNENV (91 aa)). Asn56, Asn83, Asn84, Asn91, and Asn113 each carry an N-linked (GlcNAc...) asparagine glycan. A disordered region spans residues 100 to 119 (ESPKATTTQHTVTNTTVPPD). The segment covering 105 to 115 (TTTQHTVTNTT) has biased composition (low complexity). Cys120 and Cys327 form a disulfide bridge. The chain crosses the membrane as a helical span at residues 133–153 (QVGLLFASKATVQLLTNPFIG). Topologically, residues 154-162 (LLTNRIGYP) are cytoplasmic. The helical transmembrane segment at 163–183 (IPMFAGFCIMFISTVMFAFSS) threads the bilayer. The Extracellular segment spans residues 184–192 (SYAFLLIAR). Residues 193–213 (SLQGIGSSCSSVAGMGMLASV) form a helical membrane-spanning segment. Residues 214 to 222 (YTDDEERGN) are Cytoplasmic-facing. Residues 223-245 (AMGIALGGLAMGVLVGPPFGSVL) traverse the membrane as a helical segment. Serotonin contacts are provided by Leu231 and Val235. Residues 246 to 251 (YEFVGK) are Extracellular-facing. Residues 252–274 (TAPFLVLAALVLLDGAIQLFVLQ) traverse the membrane as a helical segment. Residues 275-294 (PSRVQPESQKGTPLTTLLKD) are Cytoplasmic-facing. A helical membrane pass occupies residues 295-314 (PYILIAAGSICFANMGIAML). Residues Asn308, Ile311, Glu315, Phe337, and Tyr344 each coordinate serotonin. The Extracellular segment spans residues 315-331 (EPALPIWMMETMCSRKW). Residues 332–355 (QLGVAFLPASISYLIGTNIFGILA) form a helical membrane-spanning segment. The Cytoplasmic portion of the chain corresponds to 356 to 360 (HKMGR). A helical transmembrane segment spans residues 361–381 (WLCALLGMIVVGISILCIPFA). The Extracellular portion of the chain corresponds to 382-392 (KNIYGLIAPNF). The helical transmembrane segment at 393–413 (GVGFAIGMVDSSMMPIMGYLV) threads the bilayer. Asp402 provides a ligand contact to serotonin. At 414-417 (DLRH) the chain is on the cytoplasmic side. A helical transmembrane segment spans residues 418–438 (VSVYGSVYAIADVAFCMGYAI). Position 436 (Tyr436) interacts with serotonin. Over 439 to 443 (GPSAG) the chain is Extracellular. The helical transmembrane segment at 444 to 465 (GAIAKAIGFPWLMTIIGIIDIV) threads the bilayer. The Cytoplasmic segment spans residues 466-517 (FAPLCFFLRSPPAKEEKMAILMDHNCPIKTKMYTQNNVQPYPVGDDEESESD). Residues Ser514 and Ser516 each carry the phosphoserine; by CK2 modification.

It belongs to the major facilitator superfamily. Vesicular transporter family. In terms of assembly, interacts with SLC6A3. As to expression, expressed in striata and substantia nigra.

It localises to the cytoplasmic vesicle. The protein localises to the secretory vesicle. It is found in the synaptic vesicle membrane. The protein resides in the secretory vesicle membrane. Its subcellular location is the cell projection. It localises to the axon. The protein localises to the dendrite. The enzyme catalyses serotonin(in) + 2 H(+)(out) = serotonin(out) + 2 H(+)(in). It catalyses the reaction dopamine(in) + 2 H(+)(out) = dopamine(out) + 2 H(+)(in). It carries out the reaction histamine(in) + 2 H(+)(out) = histamine(out) + 2 H(+)(in). With respect to regulation, strongly inhibited by reserpine and tetrabenazine. Also inhibited to a lesser extent by ketanserin and fenfluramine. Reserpine and ketanserin inhibit by blocking the substrate-binding pocket. Tetrabenazine traps SLC18A2/VMAT2 in an occluded conformation and its inhibition is specific to SLC18A2/VMAT2 but not SLC18A1/VMAT1. Electrogenic antiporter that exchanges one cationic monoamine with two intravesicular protons across the membrane of secretory and synaptic vesicles. Uses the electrochemical proton gradient established by the V-type proton-pump ATPase to accumulate high concentrations of monoamines inside the vesicles prior to their release via exocytosis. Transports a variety of catecholamines such as dopamine, adrenaline and noradrenaline, histamine, and indolamines such as serotonin. Regulates the transvesicular monoaminergic gradient that determines the quantal size. Mediates somatodendritic dopamine release in hippocampal neurons, likely as part of a regulated secretory pathway that integrates retrograde synaptic signals. Acts as a primary transporter for striatal dopamine loading ensuring impulse-dependent release of dopamine at the synaptic cleft. Responsible for histamine and serotonin storage and subsequent corelease from mast cell granules. In Mus musculus (Mouse), this protein is Synaptic vesicular amine transporter (Slc18a2).